Reading from the N-terminus, the 456-residue chain is ATP synthase subunit beta (456 aa).

Residue 135–142 (GGAGVGKT) participates in ATP binding.

The protein belongs to the ATPase alpha/beta chains family. F-type ATPases have 2 components, CF(1) - the catalytic core - and CF(0) - the membrane proton channel. CF(1) has five subunits: alpha(3), beta(3), gamma(1), delta(1), epsilon(1). CF(0) has four main subunits: a(1), b(1), b'(1) and c(9-12).

Its subcellular location is the cellular thylakoid membrane. The enzyme catalyses ATP + H2O + 4 H(+)(in) = ADP + phosphate + 5 H(+)(out). Its function is as follows. Produces ATP from ADP in the presence of a proton gradient across the membrane. The catalytic sites are hosted primarily by the beta subunits. This Acaryochloris marina (strain MBIC 11017) protein is ATP synthase subunit beta (atpD).